A 604-amino-acid polypeptide reads, in one-letter code: Aspartate--tRNA(Asp/Asn) ligase (604 aa).

Position 175 (E175) interacts with L-aspartate. The aspartate stretch occupies residues 199–202 (QQFK). L-aspartate is bound by residues R221 and H456. ATP is bound at residue 221–223 (RDE). Position 496 (E496) interacts with ATP. R503 provides a ligand contact to L-aspartate. 548 to 551 (GVDR) is an ATP binding site.

Belongs to the class-II aminoacyl-tRNA synthetase family. Type 1 subfamily. Homodimer.

It is found in the cytoplasm. The enzyme catalyses tRNA(Asx) + L-aspartate + ATP = L-aspartyl-tRNA(Asx) + AMP + diphosphate. Its function is as follows. Aspartyl-tRNA synthetase with relaxed tRNA specificity since it is able to aspartylate not only its cognate tRNA(Asp) but also tRNA(Asn). Reaction proceeds in two steps: L-aspartate is first activated by ATP to form Asp-AMP and then transferred to the acceptor end of tRNA(Asp/Asn). The protein is Aspartate--tRNA(Asp/Asn) ligase of Methylorubrum populi (strain ATCC BAA-705 / NCIMB 13946 / BJ001) (Methylobacterium populi).